The sequence spans 518 residues: Serine--tRNA ligase, mitochondrial (518 aa).

The transit peptide at 1 to 34 directs the protein to the mitochondrion; the sequence is MAASMARLWWPFLARQGLRSRGRCVCSQNPRRSF. Position 110 is an N6-acetyllysine (Lys-110). Position 195 is an N6-succinyllysine (Lys-195). An L-serine-binding site is contributed by 299-301; sequence TAE. An ATP-binding site is contributed by 330–332; the sequence is RAE. Lys-337 is modified (N6-succinyllysine). Val-345 contributes to the ATP binding site. Glu-352 is an L-serine binding site. Residue 418-421 participates in ATP binding; that stretch reads EVTS. Position 453 (Thr-453) interacts with L-serine. The disordered stretch occupies residues 497–518; that stretch reads PLQYIGPNQPQKPRLPGQSATR.

It belongs to the class-II aminoacyl-tRNA synthetase family. Type-1 seryl-tRNA synthetase subfamily. In terms of assembly, homodimer. The tRNA molecule probably binds across the dimer. Ubiquitous.

Its subcellular location is the mitochondrion matrix. The catalysed reaction is tRNA(Ser) + L-serine + ATP = L-seryl-tRNA(Ser) + AMP + diphosphate + H(+). The enzyme catalyses tRNA(Sec) + L-serine + ATP = L-seryl-tRNA(Sec) + AMP + diphosphate + H(+). The protein operates within aminoacyl-tRNA biosynthesis; selenocysteinyl-tRNA(Sec) biosynthesis; L-seryl-tRNA(Sec) from L-serine and tRNA(Sec): step 1/1. In terms of biological role, catalyzes the attachment of serine to tRNA(Ser). Is also probably able to aminoacylate tRNA(Sec) with serine, to form the misacylated tRNA L-seryl-tRNA(Sec), which will be further converted into selenocysteinyl-tRNA(Sec). The chain is Serine--tRNA ligase, mitochondrial (Sars2) from Mus musculus (Mouse).